Consider the following 150-residue polypeptide: uncharacterized protein (150 aa).

A run of 5 repeats spans residues 101-105 (FHEVN), 106-110 (HHEVN), 111-115 (HHKIN), 116-120 (HHEVN), and 121-125 (HHKIN). The 5 X 5 AA tandem repeats of [FH]-H-[EK]-[IV]-N stretch occupies residues 101–125 (FHEVNHHEVNHHKINHHEVNHHKIN).

This sequence belongs to the asfivirus D129L family.

This is an uncharacterized protein from African swine fever virus (isolate Tick/Malawi/Lil 20-1/1983) (ASFV).